The chain runs to 403 residues: Deubiquitinase and deneddylase Dub1 (403 aa).

The segment covering 1–11 (MLSPTNSTSKT) has biased composition (polar residues). Residues 1-24 (MLSPTNSTSKTAPVPPRDSSKPVL) form a disordered region. Residues 40-60 (TALAVLLVVVTLGLILLFYSF) traverse the membrane as a helical segment. The segment at 77–132 (KEQPTISIPVPLPSPPLAVPRPSTPPAPTPAISRPSTPSAPKPSTPPPLLPKAPKP) is disordered. Composition is skewed to pro residues over residues 86–105 (VPLPSPPLAVPRPSTPPAPT) and 114–130 (PSAPKPSTPPPLLPKAP). Residues histidine 277, aspartate 294, and cysteine 347 contribute to the active site.

This sequence belongs to the peptidase C48 family.

It is found in the secreted. Its subcellular location is the host cell. The protein localises to the membrane. Effector proteins function to alter host cell physiology and promote bacterial survival in host tissues. This protease possesses deubiquitinating and deneddylating activities. The sequence is that of Deubiquitinase and deneddylase Dub1 (cdu1) from Chlamydia trachomatis serovar L2b (strain UCH-1/proctitis).